Here is an 822-residue protein sequence, read N- to C-terminus: Putative ESX-1 scaffolding and assembly protein SaeB (822 aa).

Its function is as follows. May be involved in assembly of the ESX-1 / type VII specialized secretion system (T7SS), which exports several proteins including EsxA and EsxB. Involved in DNA conjugation in recipient (MDK8) but not donor (mc(2)155) strain. This chain is Putative ESX-1 scaffolding and assembly protein SaeB, found in Mycolicibacterium smegmatis (strain ATCC 700084 / mc(2)155) (Mycobacterium smegmatis).